Here is a 238-residue protein sequence, read N- to C-terminus: Probable transcriptional regulatory protein CT_457 (238 aa).

Residues 1–21 (MAGHSKWANTKHRKERADHKK) form a disordered region. The span at 9–21 (NTKHRKERADHKK) shows a compositional bias: basic residues.

It belongs to the TACO1 family.

The protein localises to the cytoplasm. The protein is Probable transcriptional regulatory protein CT_457 of Chlamydia trachomatis serovar D (strain ATCC VR-885 / DSM 19411 / UW-3/Cx).